We begin with the raw amino-acid sequence, 372 residues long: 4-hydroxy-3-methylbut-2-en-1-yl diphosphate synthase (flavodoxin) (372 aa).

Residues Cys-270, Cys-273, Cys-305, and Glu-312 each coordinate [4Fe-4S] cluster.

This sequence belongs to the IspG family. The cofactor is [4Fe-4S] cluster.

The enzyme catalyses (2E)-4-hydroxy-3-methylbut-2-enyl diphosphate + oxidized [flavodoxin] + H2O + 2 H(+) = 2-C-methyl-D-erythritol 2,4-cyclic diphosphate + reduced [flavodoxin]. The protein operates within isoprenoid biosynthesis; isopentenyl diphosphate biosynthesis via DXP pathway; isopentenyl diphosphate from 1-deoxy-D-xylulose 5-phosphate: step 5/6. Functionally, converts 2C-methyl-D-erythritol 2,4-cyclodiphosphate (ME-2,4cPP) into 1-hydroxy-2-methyl-2-(E)-butenyl 4-diphosphate. The protein is 4-hydroxy-3-methylbut-2-en-1-yl diphosphate synthase (flavodoxin) of Idiomarina loihiensis (strain ATCC BAA-735 / DSM 15497 / L2-TR).